Consider the following 407-residue polypeptide: tRNA-specific 2-thiouridylase MnmA (407 aa).

ATP contacts are provided by residues alanine 20–serine 27 and leucine 46. Cysteine 114 (nucleophile) is an active-site residue. Cysteine 114 and cysteine 210 are joined by a disulfide. Residue glycine 138 coordinates ATP. Positions arginine 160 to glutamine 162 are interaction with tRNA. The active-site Cysteine persulfide intermediate is cysteine 210.

This sequence belongs to the MnmA/TRMU family.

It localises to the cytoplasm. The enzyme catalyses S-sulfanyl-L-cysteinyl-[protein] + uridine(34) in tRNA + AH2 + ATP = 2-thiouridine(34) in tRNA + L-cysteinyl-[protein] + A + AMP + diphosphate + H(+). Its function is as follows. Catalyzes the 2-thiolation of uridine at the wobble position (U34) of tRNA, leading to the formation of s(2)U34. This Bartonella tribocorum (strain CIP 105476 / IBS 506) protein is tRNA-specific 2-thiouridylase MnmA.